The following is a 37-amino-acid chain: Cellular retinoic acid-binding protein 2 (37 aa).

Residues 21-31 (KALGVNMMLRK) carry the Nuclear localization signal motif.

This sequence belongs to the calycin superfamily. Fatty-acid binding protein (FABP) family. In terms of tissue distribution, embryo.

It localises to the cytoplasm. The protein resides in the endoplasmic reticulum. The protein localises to the nucleus. In terms of biological role, transports retinoic acid to the nucleus. Regulates the access of retinoic acid to the nuclear retinoic acid receptors. The chain is Cellular retinoic acid-binding protein 2 (CRABP2) from Gallus gallus (Chicken).